Here is a 715-residue protein sequence, read N- to C-terminus: Fatty acid oxidation complex subunit alpha (715 aa).

Residues 1–190 (MIYEGKAITV…KVGAVDAVVA (190 aa)) are enoyl-CoA hydratase/isomerase. Asp297 contributes to the substrate binding site. The 3-hydroxyacyl-CoA dehydrogenase stretch occupies residues 312 to 715 (KDVKQAAVLG…MAKNGQSFFG (404 aa)). NAD(+) contacts are provided by residues Met325, Asp344, 401 to 403 (VVE), Lys408, and Ser430. The active-site For 3-hydroxyacyl-CoA dehydrogenase activity is the His451. An NAD(+)-binding site is contributed by Asn454. Residues Asn501 and Tyr660 each coordinate substrate.

The protein in the N-terminal section; belongs to the enoyl-CoA hydratase/isomerase family. In the C-terminal section; belongs to the 3-hydroxyacyl-CoA dehydrogenase family. In terms of assembly, heterotetramer of two alpha chains (FadB) and two beta chains (FadA).

It catalyses the reaction a (3S)-3-hydroxyacyl-CoA + NAD(+) = a 3-oxoacyl-CoA + NADH + H(+). The catalysed reaction is a (3S)-3-hydroxyacyl-CoA = a (2E)-enoyl-CoA + H2O. It carries out the reaction a 4-saturated-(3S)-3-hydroxyacyl-CoA = a (3E)-enoyl-CoA + H2O. The enzyme catalyses (3S)-3-hydroxybutanoyl-CoA = (3R)-3-hydroxybutanoyl-CoA. It catalyses the reaction a (3Z)-enoyl-CoA = a 4-saturated (2E)-enoyl-CoA. The catalysed reaction is a (3E)-enoyl-CoA = a 4-saturated (2E)-enoyl-CoA. It participates in lipid metabolism; fatty acid beta-oxidation. Its function is as follows. Involved in the aerobic and anaerobic degradation of long-chain fatty acids via beta-oxidation cycle. Catalyzes the formation of 3-oxoacyl-CoA from enoyl-CoA via L-3-hydroxyacyl-CoA. It can also use D-3-hydroxyacyl-CoA and cis-3-enoyl-CoA as substrate. The sequence is that of Fatty acid oxidation complex subunit alpha from Pseudomonas fluorescens (strain ATCC BAA-477 / NRRL B-23932 / Pf-5).